An 882-amino-acid polypeptide reads, in one-letter code: Cadherin-1 (882 aa).

Residues 1 to 23 (MGPWSRSLSALCCCCRCNPWLCR) form the signal peptide. A propeptide spanning residues 24 to 154 (EPEPCIPGFG…PHHGLRRQKR (131 aa)) is cleaved from the precursor. A disordered region spans residues 117–137 (EVSAHHHHHHSHHDSPSGTQT). Cadherin domains follow at residues 154 to 262 (RDWV…KPQF), 263 to 375 (TQEV…APRF), 376 to 486 (NPTT…APIF), 487 to 595 (VPPQ…GPVP), and 594 to 702 (VPEP…RPAE). Residues 155–709 (DWVIPPISCP…PAEAGLQVPA (555 aa)) are Extracellular-facing. Residue Ser280 is glycosylated (O-linked (Man...) serine). Residues Thr285, Thr358, Thr470, Thr472, and Thr509 are each glycosylated (O-linked (Man...) threonine). Asn558 is a glycosylation site (N-linked (GlcNAc...) asparagine). Thr576, Thr578, and Thr580 each carry an O-linked (Man...) threonine glycan. Asn637 is a glycosylation site (N-linked (GlcNAc...) asparagine). A helical transmembrane segment spans residues 710-730 (ILGILGGILAFLILILLLLLL). Residues 731 to 882 (VRRRRVVKEP…ADMYGGGEDD (152 aa)) lie on the Cytoplasmic side of the membrane. The tract at residues 747 to 767 (DTRDNVYYYDEEGGGEEDQDF) is disordered. Phosphotyrosine; by SRC occurs at positions 753, 754, and 755. Residues 755–767 (YDEEGGGEEDQDF) are compositionally biased toward acidic residues. The interval 758–769 (EGGGEEDQDFDL) is required for binding CTNND1 and PSEN1. A phosphoserine mark is found at Ser770, Ser793, Ser838, Ser840, and Ser846. The required for binding alpha, beta and gamma catenins stretch occupies residues 811-882 (IDENLKAADS…ADMYGGGEDD (72 aa)).

In terms of assembly, homodimer; disulfide-linked. Component of an E-cadherin/ catenin adhesion complex composed of at least E-cadherin/CDH1, beta-catenin/CTNNB1 or gamma-catenin/JUP, and potentially alpha-catenin/CTNNA1; the complex is located to adherens junctions. Found in a complex composed of CDH1, RAP1A and PKP3; PKP3 acts as a scaffold protein within the complex, the complex is required for CDH1 localization to mature desmosome cell junctions. Interacts with the TRPV4 and CTNNB1 complex. Interacts with CTNND1. The stable association of CTNNA1 is controversial as CTNNA1 was shown not to bind to F-actin when assembled in the complex. Alternatively, the CTNNA1-containing complex may be linked to F-actin by other proteins such as LIMA1. Interaction with PSEN1, cleaves CDH1 resulting in the disassociation of cadherin-based adherens junctions (CAJs). Interacts with AJAP1 and DLGAP5. Interacts with TBC1D2. Interacts with CAV1. Interacts with PIP5K1C. Interacts with RAB8B. Interacts with DDR1; this stabilizes CDH1 at the cell surface and inhibits its internalization. Interacts with RAPGEF2. Interacts with KLRG1. Forms a ternary complex composed of ADAM10, CADH1 and EPHA4; within the complex, CADH1 is cleaved by ADAM10 which disrupts adherens junctions. Interacts with SPEF1. Interacts with CTNNB1 and PKP2. Interacts with AMOTL2; the interaction may facilitate binding of radial actin fibers to cell junction complexes. Interacts with DSG3; the interaction is required for CDH1 localization to developing adherens junctions. Post-translationally, during apoptosis or with calcium influx, cleaved by a membrane-bound metalloproteinase (ADAM10), PS1/gamma-secretase and caspase-3. Processing by the metalloproteinase, induced by calcium influx, causes disruption of cell-cell adhesion and the subsequent release of beta-catenin into the cytoplasm. The residual membrane-tethered cleavage product is rapidly degraded via an intracellular proteolytic pathway. Cleavage by caspase-3 releases the cytoplasmic tail resulting in disintegration of the actin microfilament system. The gamma-secretase-mediated cleavage promotes disassembly of adherens junctions. During development of the cochlear organ of Corti, cleavage by ADAM10 at adherens junctions promotes pillar cell separation. N-glycosylation at Asn-637 is essential for expression, folding and trafficking. Addition of bisecting N-acetylglucosamine by MGAT3 modulates its cell membrane location. In terms of processing, ubiquitinated by a SCF complex containing SKP2, which requires prior phosphorylation by CK1/CSNK1A1. Ubiquitinated by CBLL1/HAKAI, requires prior phosphorylation at Tyr-754. Post-translationally, O-glycosylated. O-manosylated by TMTC1, TMTC2, TMTC3 or TMTC4. Thr-285 and Thr-509 are O-mannosylated by TMTC2 or TMTC4 but not TMTC1 or TMTC3.

The protein resides in the cell junction. The protein localises to the adherens junction. It is found in the cell membrane. Its subcellular location is the endosome. It localises to the golgi apparatus. The protein resides in the trans-Golgi network. The protein localises to the cytoplasm. It is found in the desmosome. Functionally, cadherins are calcium-dependent cell adhesion proteins. They preferentially interact with themselves in a homophilic manner in connecting cells; cadherins may thus contribute to the sorting of heterogeneous cell types. CDH1 is involved in mechanisms regulating cell-cell adhesions, mobility and proliferation of epithelial cells. Promotes organization of radial actin fiber structure and cellular response to contractile forces, via its interaction with AMOTL2 which facilitates anchoring of radial actin fibers to CDH1 junction complexes at the cell membrane. Plays a role in the early stages of desmosome cell-cell junction formation via facilitating the recruitment of DSG2 and DSP to desmosome plaques. Has a potent invasive suppressor role. It is a ligand for integrin alpha-E/beta-7. Its function is as follows. E-Cad/CTF2 promotes non-amyloidogenic degradation of Abeta precursors. Has a strong inhibitory effect on APP C99 and C83 production. This is Cadherin-1 (CDH1) from Bos taurus (Bovine).